We begin with the raw amino-acid sequence, 250 residues long: Probable S-methyl-5'-thioinosine phosphorylase (250 aa).

Phosphate-binding positions include T14 and R56–H57. M189 is a binding site for substrate. A phosphate-binding site is contributed by T190. N213–A215 is a binding site for substrate.

This sequence belongs to the PNP/MTAP phosphorylase family. MTAP subfamily. Homotrimer.

The catalysed reaction is S-methyl-5'-thioinosine + phosphate = 5-(methylsulfanyl)-alpha-D-ribose 1-phosphate + hypoxanthine. It functions in the pathway purine metabolism; purine nucleoside salvage. In terms of biological role, catalyzes the reversible phosphorylation of S-methyl-5'-thioinosine (MTI) to hypoxanthine and 5-methylthioribose-1-phosphate. Involved in the breakdown of S-methyl-5'-thioadenosine (MTA), a major by-product of polyamine biosynthesis. Catabolism of (MTA) occurs via deamination to MTI and phosphorolysis to hypoxanthine. This chain is Probable S-methyl-5'-thioinosine phosphorylase, found in Xanthomonas campestris pv. campestris (strain ATCC 33913 / DSM 3586 / NCPPB 528 / LMG 568 / P 25).